A 311-amino-acid chain; its full sequence is tRNA pseudouridine synthase B (311 aa).

Asp52 functions as the Nucleophile in the catalytic mechanism.

The protein belongs to the pseudouridine synthase TruB family. Type 1 subfamily.

The catalysed reaction is uridine(55) in tRNA = pseudouridine(55) in tRNA. Its function is as follows. Responsible for synthesis of pseudouridine from uracil-55 in the psi GC loop of transfer RNAs. This is tRNA pseudouridine synthase B from Burkholderia mallei (strain ATCC 23344).